The following is a 374-amino-acid chain: Alpha-N-acetylgalactosaminide alpha-2,6-sialyltransferase 2 (374 aa).

Topologically, residues 1 to 7 are cytoplasmic; it reads MGLPRGS. Residues 8–28 form a helical; Signal-anchor for type II membrane protein membrane-spanning segment; it reads FFWLLLLLTAACSGLLFALYF. The Lumenal segment spans residues 29–374; it reads SAVQRYPGPA…KAGILQLYQR (346 aa). Cystine bridges form between C66-C148 and C151-C317. Residues N85 and N130 are each glycosylated (N-linked (GlcNAc...) asparagine). Position 156 (N156) interacts with CMP-N-acetyl-beta-neuraminate. N161 is a glycosylation site (N-linked (GlcNAc...) asparagine). Residues N179, S304, and H336 each coordinate CMP-N-acetyl-beta-neuraminate.

It belongs to the glycosyltransferase 29 family. Expressed in skeletal muscle, heart, kidney, placenta, lung and leukocytes.

The protein localises to the golgi apparatus membrane. It carries out the reaction a beta-D-galactosyl-(1-&gt;3)-N-acetyl-alpha-D-galactosaminyl derivative + CMP-N-acetyl-beta-neuraminate = a beta-D-galactosyl-(1-&gt;3)-[N-acetyl-alpha-neuraminyl-(2-&gt;6)]-N-acetyl-alpha-D-galactosaminyl derivative + CMP + H(+). The enzyme catalyses a 3-O-[N-acetyl-alpha-D-galactosaminyl]-L-threonyl-[protein] + CMP-N-acetyl-beta-neuraminate = a 3-O-[N-acetyl-alpha-neuraminosyl-(2-&gt;6)-N-acetyl-alpha-D-galactosaminyl]-L-threonyl-[protein] + CMP + H(+). It catalyses the reaction a 3-O-[N-acetyl-alpha-neuraminyl-(2-&gt;3)-beta-D-galactosyl-(1-&gt;3)-N-acetyl-alpha-D-galactosaminyl]-L-threonyl-[protein] + CMP-N-acetyl-beta-neuraminate = a 3-O-{alpha-Neu5Ac-(2-&gt;3)-beta-D-Gal-(1-&gt;3)-[alpha-Neu5Ac-(2-&gt;6)]-alpha-D-GalNAc}-L-threonyl-[protein] + CMP + H(+). The protein operates within protein modification; protein glycosylation. Catalyzes the transfer of N-acetylneuraminyl groups onto glycan chains in glycoproteins. Conjugates sialic acid with an alpha-2-6 linkage to N-acetylgalactosamine (GalNAc) glycan chains linked to serine or threonine in glycoproteins. Sialylates alphaGalNAc- and Galbeta1-&gt;3GalNAc-O-Ser/Thr epitopes also known as Tn and T antigens. This chain is Alpha-N-acetylgalactosaminide alpha-2,6-sialyltransferase 2 (ST6GALNAC2), found in Homo sapiens (Human).